Consider the following 327-residue polypeptide: 4-hydroxyproline 2-epimerase (327 aa).

Catalysis depends on Cys85, which acts as the Proton acceptor. Residues 86 to 87 (GH), His205, and Asp231 contribute to the substrate site. Catalysis depends on Cys235, which acts as the Proton donor. 236-237 (GT) lines the substrate pocket.

This sequence belongs to the proline racemase family.

It carries out the reaction trans-4-hydroxy-L-proline = cis-4-hydroxy-D-proline. Functionally, catalyzes the epimerization of trans-4-hydroxy-L-proline (t4LHyp) to cis-4-hydroxy-D-proline (c4DHyp). Displays no proline racemase activity. This is 4-hydroxyproline 2-epimerase from Roseibium alexandrii (strain DSM 17067 / NCIMB 14079 / DFL-11) (Labrenzia alexandrii).